A 562-amino-acid polypeptide reads, in one-letter code: Phosphatidylinositol 4-phosphate 5-kinase type-1 alpha (562 aa).

Positions 81–449 (TSSALKGAIQ…RFQRFMCNTV (369 aa)) constitute a PIPK domain. A Glycyl lysine isopeptide (Lys-Gly) (interchain with G-Cter in ubiquitin) cross-link involves residue Lys-103. Ser-486 is subject to Phosphoserine. The interval 506–526 (HLGRPDVLPQTPPLEEISEGS) is disordered.

In terms of assembly, interacts with RAC1. Interacts with TUT1. Forms a complex with CDH1/E-cadherin, CTNNB1/beta-catenin and CTNND1 at the plasma membrane upon calcium stimulation. Found in a ternary complex with IRS1 and DGKZ in the absence of insulin stimulation. Interacts with DGKZ. Interacts with PIP4K2C; the interaction inhibits PIP5K1A kinase activity. As to expression, highly expressed in heart, placenta, skeletal muscle, kidney and pancreas. Detected at lower levels in brain, lung and liver.

Its subcellular location is the cell membrane. The protein resides in the cytoplasm. The protein localises to the nucleus. It is found in the nucleus speckle. It localises to the cell projection. Its subcellular location is the ruffle. The protein resides in the lamellipodium. The enzyme catalyses a 1,2-diacyl-sn-glycero-3-phospho-(1D-myo-inositol 4-phosphate) + ATP = a 1,2-diacyl-sn-glycero-3-phospho-(1D-myo-inositol-4,5-bisphosphate) + ADP + H(+). It catalyses the reaction 1-octadecanoyl-2-(5Z,8Z,11Z,14Z)-eicosatetraenoyl-sn-glycero-3-phospho-1D-myo-inositol 4-phosphate + ATP = 1-octadecanoyl-2-(5Z,8Z,11Z,14Z)-eicosatetraenoyl-sn-glycero-3-phospho-1D-myo-inositol 4,5-bisphosphate + ADP + H(+). It carries out the reaction 1,2-dihexadecanoyl-sn-glycero-3-phospho-(1D-myo-inositol-4-phosphate) + ATP = 1,2-dihexadecanoyl-sn-glycero-3-phospho-(1D-myo-inositol-4,5-bisphosphate) + ADP + H(+). The catalysed reaction is 1-octadecanoyl-2-(9Z)-octadecenoyl-sn-glycero-3-phospho-1D-myo-inositol 4-phosphate + ATP = 1-octadecanoyl-2-(9Z)-octadecenoyl-sn-glycero-3-phospho-1D-myo-inositol 4,5-bisphosphate + ADP + H(+). The enzyme catalyses 1-octadecanoyl-2-(9Z)-octadecenoyl-sn-glycero-3-phospho-1D-myo-inositol + ATP = 1-octadecanoyl-2-(9Z)-octadecenoyl-sn-glycero-3-phospho-1D-myo-inositol 5-phosphate + ADP + H(+). It catalyses the reaction 1-octadecanoyl-2-(9Z,12Z)-octadecadienoyl-sn-glycero-3-phospho-1D-myo-inositol + ATP = 1-octadecanoyl-2-(9Z,12Z)-octadecadienoyl-sn-glycero-3-phospho-1D-myo-inositol 5-phosphate + ADP + H(+). It carries out the reaction 1-octadecanoyl-2-(5Z,8Z,11Z,14Z-eicosatetraenoyl)-sn-glycero-3-phospho-(1D-myo-inositol) + ATP = 1-octadecanoyl-2-(5Z,8Z,11Z,14Z)-eicosatetraenoyl-sn-glycero-3-phospho-1D-myo-inositol 5-phosphate + ADP + H(+). The catalysed reaction is 1,2-di-(9Z,12Z)-octadecadienoyl-sn-glycero-3-phospho-1D-myo-inositol + ATP = 1,2-di(9Z,12Z)-octadecadienoyl-sn-glycero-3-phospho-1D-myo-inositol 5-phosphate + ADP + H(+). Its activity is regulated as follows. Activated by diarachidonoyl phosphatidic acid (DAPA), when 1,2-dipalmitoyl-PI4P is used as a substrate. Its function is as follows. Catalyzes the phosphorylation of phosphatidylinositol 4-phosphate (PtdIns(4)P/PI4P) to form phosphatidylinositol 4,5-bisphosphate (PtdIns(4,5)P2/PIP2), a lipid second messenger that regulates several cellular processes such as signal transduction, vesicle trafficking, actin cytoskeleton dynamics, cell adhesion, and cell motility. PtdIns(4,5)P2 can directly act as a second messenger or can be utilized as a precursor to generate other second messengers: inositol 1,4,5-trisphosphate (IP3), diacylglycerol (DAG) or phosphatidylinositol-3,4,5-trisphosphate (PtdIns(3,4,5)P3/PIP3). PIP5K1A-mediated phosphorylation of PtdIns(4)P is the predominant pathway for PtdIns(4,5)P2 synthesis. Can also use phosphatidylinositol (PtdIns) as substrate in vitro. Together with PIP5K1C, is required for phagocytosis, both enzymes regulating different types of actin remodeling at sequential steps. Promotes particle ingestion by activating the WAS GTPase-binding protein that induces Arp2/3 dependent actin polymerization at the nascent phagocytic cup. Together with PIP5K1B, is required, after stimulation by G-protein coupled receptors, for the synthesis of IP3 that will induce stable platelet adhesion. Recruited to the plasma membrane by the E-cadherin/beta-catenin complex where it provides the substrate PtdIns(4,5)P2 for the production of PtdIns(3,4,5)P3, IP3 and DAG, that will mobilize internal calcium and drive keratinocyte differentiation. Positively regulates insulin-induced translocation of SLC2A4 to the cell membrane in adipocytes. Together with PIP5K1C has a role during embryogenesis. Independently of its catalytic activity, is required for membrane ruffling formation, actin organization and focal adhesion formation during directional cell migration by controlling integrin-induced translocation of the small GTPase RAC1 to the plasma membrane. Also functions in the nucleus where it acts as an activator of TUT1 adenylyltransferase activity in nuclear speckles, thereby regulating mRNA polyadenylation of a select set of mRNAs. The protein is Phosphatidylinositol 4-phosphate 5-kinase type-1 alpha of Homo sapiens (Human).